Reading from the N-terminus, the 203-residue chain is Imidazoleglycerol-phosphate dehydratase (203 aa).

Residues 184-203 are disordered; the sequence is DPRRSSQIPSSKGVLEQAGQ.

It belongs to the imidazoleglycerol-phosphate dehydratase family.

It localises to the cytoplasm. It carries out the reaction D-erythro-1-(imidazol-4-yl)glycerol 3-phosphate = 3-(imidazol-4-yl)-2-oxopropyl phosphate + H2O. It participates in amino-acid biosynthesis; L-histidine biosynthesis; L-histidine from 5-phospho-alpha-D-ribose 1-diphosphate: step 6/9. This is Imidazoleglycerol-phosphate dehydratase from Prochlorococcus marinus (strain NATL1A).